A 374-amino-acid chain; its full sequence is Glutamate 5-kinase (374 aa).

Lysine 17 contributes to the ATP binding site. Substrate contacts are provided by serine 57, aspartate 144, and asparagine 156. ATP is bound by residues 176–177 (SD) and 218–224 (TGGMVTK). Residues 280-358 (QGALVLDDGA…RELARELGPA (79 aa)) form the PUA domain.

It belongs to the glutamate 5-kinase family.

It localises to the cytoplasm. The enzyme catalyses L-glutamate + ATP = L-glutamyl 5-phosphate + ADP. The protein operates within amino-acid biosynthesis; L-proline biosynthesis; L-glutamate 5-semialdehyde from L-glutamate: step 1/2. Its function is as follows. Catalyzes the transfer of a phosphate group to glutamate to form L-glutamate 5-phosphate. This Streptomyces coelicolor (strain ATCC BAA-471 / A3(2) / M145) protein is Glutamate 5-kinase.